The following is a 169-amino-acid chain: S-ribosylhomocysteine lyase (169 aa).

3 residues coordinate Fe cation: His-54, His-58, and Cys-128.

Belongs to the LuxS family. As to quaternary structure, homodimer. Requires Fe cation as cofactor.

It carries out the reaction S-(5-deoxy-D-ribos-5-yl)-L-homocysteine = (S)-4,5-dihydroxypentane-2,3-dione + L-homocysteine. In terms of biological role, involved in the synthesis of autoinducer 2 (AI-2) which is secreted by bacteria and is used to communicate both the cell density and the metabolic potential of the environment. The regulation of gene expression in response to changes in cell density is called quorum sensing. Catalyzes the transformation of S-ribosylhomocysteine (RHC) to homocysteine (HC) and 4,5-dihydroxy-2,3-pentadione (DPD). The protein is S-ribosylhomocysteine lyase of Shewanella sediminis (strain HAW-EB3).